A 993-amino-acid polypeptide reads, in one-letter code: Signal peptide, CUB and EGF-like domain-containing protein 3 (993 aa).

The signal sequence occupies residues 1–20; that stretch reads MGSGRVPGLCLLVLLVHARA. Positions 29–69 constitute an EGF-like 1; calcium-binding domain; sequence DVDECVEGTDNCHIDAICQNTPRSYKCICKSGYTGDGKHCK. Intrachain disulfides connect Cys33–Cys46, Cys40–Cys55, Cys57–Cys68, Cys74–Cys86, Cys82–Cys95, Cys97–Cys110, Cys116–Cys127, Cys123–Cys136, Cys161–Cys172, Cys168–Cys182, Cys184–Cys197, Cys201–Cys212, Cys208–Cys221, Cys223–Cys236, Cys240–Cys251, Cys247–Cys260, Cys262–Cys275, Cys281–Cys292, Cys288–Cys301, Cys303–Cys316, Cys322–Cys332, Cys328–Cys341, Cys343–Cys355, Cys361–Cys372, Cys368–Cys381, and Cys383–Cys397. The region spanning 70–111 is the EGF-like 2; calcium-binding domain; that stretch reads DVDECEREDNAGCVHDCVNIPGNYRCTCYDGFHLAHDGHNCL. In terms of domain architecture, EGF-like 3; calcium-binding spans 112–148; sequence DVDECAEGNGGCQQSCVNMMGSYECHCREGFFLSDNQ. 3 consecutive EGF-like domains span residues 157–198, 199–237, and 238–276; these read EGMN…RDCK, LTCNYGNGGCQHTCDDTEQGPRCGCHIKFVLHTDGKTCI, and ETCAVNNGGCDSKCHDAATGVHCTCPVGFMLQPDRKTCK. The EGF-like 7; calcium-binding domain maps to 277–317; sequence DIDECRLNNGGCDHICRNTVGSFECSCKKGYKLLINERNCQ. Residues 318 to 356 enclose the EGF-like 8; calcium-binding domain; that stretch reads DIDECSFDRTCDHICVNTPGSFQCLCHRGYLLYGITHCG. The EGF-like 9; calcium-binding domain occupies 357–398; the sequence is DVDECSINRGGCRFGCINTPGSYQCTCPAGQGRLHWNGKDCT. N-linked (GlcNAc...) asparagine glycans are attached at residues Asn417, Asn464, Asn685, Asn756, and Asn785. Disulfide bonds link Cys804–Cys830 and Cys857–Cys878. Residues 804-916 enclose the CUB domain; that stretch reads CGGELGEFTG…RGFQIPYVTY (113 aa).

Forms homooligomers. Forms heterooligomers with SCUBE1 and SCUBE2. Interacts with TGFBR2 through the CUB domain; this interaction does not affect TGFB1-binding to TGFBR2. Interacts with BMP2, BMP4 and BMP7; the interaction is mediated by the CUB domain. Interacts with BMPR1A, BMPR1B and BMPR2; the interaction with BMPR1A and BMPR1B is BMP2- and BMP4-dependent. In terms of processing, N-glycosylated. Post-translationally, proteolytic cleavage produces a CUB-containing C-terminal fragment that retains the ability to bind to TGFBR2. This reaction is catalyzed in vitro by MMP2 and, to a lesser extent, by MMP9. As to expression, highly expressed in osteoblasts. In normal lung, mainly expressed in bronchial epithelial cells. Tends to be up-regulated in lung cancer cells.

It is found in the secreted. The protein resides in the cell surface. Its function is as follows. Is a positive regulator of the BMP signaling pathway, required for proper chondrogenesis, osteogenesis and skeletal development. It acts as a coreceptor for BMP ligands, particularly BMP2 and BMP4, facilitating their interactions with BMP type I receptors. It is required for ligand-induced recruitment of BMP receptors to lipid rafts. Binds to TGFBR2 and activates TGFB signaling. In lung cancer cells, could serve as an endogenous autocrine and paracrine ligand of TGFBR2, which could regulate TGFBR2 signaling and hence modulate epithelial-mesenchymal transition and cancer progression. This is Signal peptide, CUB and EGF-like domain-containing protein 3 from Homo sapiens (Human).